The following is a 138-amino-acid chain: Phospholipase A2 EC3 (138 aa).

The first 16 residues, 1 to 16 (MRTLWIVAVWLMGVEG), serve as a signal peptide directing secretion. 7 disulfide bridges follow: Cys42–Cys131, Cys44–Cys60, Cys59–Cys111, Cys65–Cys138, Cys66–Cys104, Cys73–Cys97, and Cys91–Cys102. Ca(2+) is bound by residues Tyr43, Gly45, and Gly47. The active site involves His63. Ca(2+) is bound at residue Asp64. Asp105 is a catalytic residue.

The protein belongs to the phospholipase A2 family. Group II subfamily. It depends on Ca(2+) as a cofactor.

It localises to the secreted. It carries out the reaction a 1,2-diacyl-sn-glycero-3-phosphocholine + H2O = a 1-acyl-sn-glycero-3-phosphocholine + a fatty acid + H(+). Functionally, PA2 catalyzes the calcium-dependent hydrolysis of the 2-acyl groups in 3-sn-phosphoglycerides. The chain is Phospholipase A2 EC3 from Echis coloratus (Carpet viper).